We begin with the raw amino-acid sequence, 226 residues long: ATP-dependent dethiobiotin synthetase BioD (226 aa).

Residue 12 to 17 (GIGKTV) coordinates ATP. Thr16 contacts Mg(2+). Lys37 is a catalytic residue. Thr41 is a binding site for substrate. ATP is bound by residues Asp49, 108–111 (EGAG), 169–170 (GS), and 197–199 (PAG). Asp49 and Glu108 together coordinate Mg(2+).

This sequence belongs to the dethiobiotin synthetase family. As to quaternary structure, homodimer. Requires Mg(2+) as cofactor.

The protein localises to the cytoplasm. It catalyses the reaction (7R,8S)-7,8-diammoniononanoate + CO2 + ATP = (4R,5S)-dethiobiotin + ADP + phosphate + 3 H(+). The protein operates within cofactor biosynthesis; biotin biosynthesis; biotin from 7,8-diaminononanoate: step 1/2. In terms of biological role, catalyzes a mechanistically unusual reaction, the ATP-dependent insertion of CO2 between the N7 and N8 nitrogen atoms of 7,8-diaminopelargonic acid (DAPA, also called 7,8-diammoniononanoate) to form a ureido ring. This chain is ATP-dependent dethiobiotin synthetase BioD, found in Mycolicibacterium gilvum (strain PYR-GCK) (Mycobacterium gilvum (strain PYR-GCK)).